We begin with the raw amino-acid sequence, 348 residues long: Alcohol dehydrogenase 2 (348 aa).

An N-acetylserine modification is found at S2. Residues C44, H67, C98, C101, C104, C112, and C154 each contribute to the Zn(2+) site. Residues 178–184, D202, K207, 269–271, and R341 each bind NAD(+); these read GAAGGLG and VGL.

This sequence belongs to the zinc-containing alcohol dehydrogenase family. As to quaternary structure, homotetramer. Zn(2+) is required as a cofactor.

It is found in the cytoplasm. The enzyme catalyses a primary alcohol + NAD(+) = an aldehyde + NADH + H(+). It catalyses the reaction a secondary alcohol + NAD(+) = a ketone + NADH + H(+). The protein is Alcohol dehydrogenase 2 (ADH2) of Kluyveromyces marxianus (Yeast).